Reading from the N-terminus, the 589-residue chain is Coiled-coil domain-containing protein 22 homolog (589 aa).

Coiled coils occupy residues 287–426 and 523–589; these read KTPL…LQTK and CEEL…TSRQ. Residues 568–589 are disordered; sequence EMQNESQRLEESIRRMEVTSRQ. Basic and acidic residues predominate over residues 574–589; that stretch reads QRLEESIRRMEVTSRQ.

It belongs to the CCDC22 family.

The polypeptide is Coiled-coil domain-containing protein 22 homolog (Aedes aegypti (Yellowfever mosquito)).